Reading from the N-terminus, the 262-residue chain is Ferric siderophore reductase (262 aa).

[2Fe-2S] cluster is bound by residues cysteine 244, cysteine 245, cysteine 256, and cysteine 259.

Monomer. It depends on [2Fe-2S] cluster as a cofactor.

The protein localises to the cytoplasm. Its subcellular location is the cell inner membrane. Displays pH dependent redox properties. SufD is necessary for the stability of FhuF. In terms of biological role, siderophore-iron reductase which is involved in iron removal from the hydroxamate-type siderophores coprogen, ferrichrome and ferrioxamine B after their transport into the cell. Binds both the iron-loaded and the apo forms of ferrichrome. The polypeptide is Ferric siderophore reductase (fhuF) (Escherichia coli (strain K12)).